The sequence spans 303 residues: Pantothenate synthetase (303 aa).

The disordered stretch occupies residues 1–21; the sequence is MIATGHGGAERRTTAGDGTAR. 48 to 55 is an ATP binding site; that stretch reads MGALHDGH. The Proton donor role is filled by H55. Q79 lines the (R)-pantoate pocket. Beta-alanine is bound at residue Q79. 165–168 is a binding site for ATP; sequence GRKD. A (R)-pantoate-binding site is contributed by Q171. Residue 202–205 participates in ATP binding; sequence ASSR.

Belongs to the pantothenate synthetase family. Homodimer.

The protein localises to the cytoplasm. The catalysed reaction is (R)-pantoate + beta-alanine + ATP = (R)-pantothenate + AMP + diphosphate + H(+). Its pathway is cofactor biosynthesis; (R)-pantothenate biosynthesis; (R)-pantothenate from (R)-pantoate and beta-alanine: step 1/1. In terms of biological role, catalyzes the condensation of pantoate with beta-alanine in an ATP-dependent reaction via a pantoyl-adenylate intermediate. The polypeptide is Pantothenate synthetase (Acidothermus cellulolyticus (strain ATCC 43068 / DSM 8971 / 11B)).